Here is a 198-residue protein sequence, read N- to C-terminus: FMN-dependent NADH:quinone oxidoreductase (198 aa).

Residue 96–99 (MYNF) participates in FMN binding.

The protein belongs to the azoreductase type 1 family. Homodimer. The cofactor is FMN.

The enzyme catalyses 2 a quinone + NADH + H(+) = 2 a 1,4-benzosemiquinone + NAD(+). It catalyses the reaction N,N-dimethyl-1,4-phenylenediamine + anthranilate + 2 NAD(+) = 2-(4-dimethylaminophenyl)diazenylbenzoate + 2 NADH + 2 H(+). Functionally, quinone reductase that provides resistance to thiol-specific stress caused by electrophilic quinones. Also exhibits azoreductase activity. Catalyzes the reductive cleavage of the azo bond in aromatic azo compounds to the corresponding amines. This Burkholderia mallei (strain ATCC 23344) protein is FMN-dependent NADH:quinone oxidoreductase.